The following is a 493-amino-acid chain: Uridine 5'-monophosphate synthase (493 aa).

The segment at Met-1 to Ile-207 is OPRTase. Residues Asn-208–Thr-233 form a domain linker region. Residues Tyr-234 to Lys-493 are OMPdecase. Lys-320 is a catalytic residue.

It in the N-terminal section; belongs to the purine/pyrimidine phosphoribosyltransferase family. This sequence in the C-terminal section; belongs to the OMP decarboxylase family.

It carries out the reaction orotidine 5'-phosphate + diphosphate = orotate + 5-phospho-alpha-D-ribose 1-diphosphate. It catalyses the reaction orotidine 5'-phosphate + H(+) = UMP + CO2. It functions in the pathway pyrimidine metabolism; UMP biosynthesis via de novo pathway; UMP from orotate: step 1/2. The protein operates within pyrimidine metabolism; UMP biosynthesis via de novo pathway; UMP from orotate: step 2/2. The polypeptide is Uridine 5'-monophosphate synthase (r-l) (Drosophila melanogaster (Fruit fly)).